A 234-amino-acid polypeptide reads, in one-letter code: ATP-dependent dethiobiotin synthetase BioD (234 aa).

12-17 (DVGKTI) is an ATP binding site. Mg(2+) is bound at residue Thr-16. The active site involves Lys-37. A substrate-binding site is contributed by Thr-41. ATP-binding positions include Asp-54 and 115 to 118 (EGAG). Positions 54 and 115 each coordinate Mg(2+).

This sequence belongs to the dethiobiotin synthetase family. In terms of assembly, homodimer. The cofactor is Mg(2+).

It is found in the cytoplasm. It carries out the reaction (7R,8S)-7,8-diammoniononanoate + CO2 + ATP = (4R,5S)-dethiobiotin + ADP + phosphate + 3 H(+). It functions in the pathway cofactor biosynthesis; biotin biosynthesis; biotin from 7,8-diaminononanoate: step 1/2. Its function is as follows. Catalyzes a mechanistically unusual reaction, the ATP-dependent insertion of CO2 between the N7 and N8 nitrogen atoms of 7,8-diaminopelargonic acid (DAPA, also called 7,8-diammoniononanoate) to form a ureido ring. This chain is ATP-dependent dethiobiotin synthetase BioD, found in Lysinibacillus sphaericus (strain C3-41).